The following is a 156-amino-acid chain: Phosphopantetheine adenylyltransferase (156 aa).

Substrate is bound at residue Thr10. Residues 10–11 (TF) and His18 contribute to the ATP site. Substrate is bound by residues Lys42, Leu74, and Arg88. ATP-binding positions include 89-91 (GLR), Glu99, and 124-130 (NAFISSS).

The protein belongs to the bacterial CoaD family. As to quaternary structure, homohexamer. Mg(2+) serves as cofactor.

It is found in the cytoplasm. The catalysed reaction is (R)-4'-phosphopantetheine + ATP + H(+) = 3'-dephospho-CoA + diphosphate. It participates in cofactor biosynthesis; coenzyme A biosynthesis; CoA from (R)-pantothenate: step 4/5. Its function is as follows. Reversibly transfers an adenylyl group from ATP to 4'-phosphopantetheine, yielding dephospho-CoA (dPCoA) and pyrophosphate. In Campylobacter curvus (strain 525.92), this protein is Phosphopantetheine adenylyltransferase.